A 95-amino-acid polypeptide reads, in one-letter code: Small ribosomal subunit protein bS6 (95 aa).

The protein belongs to the bacterial ribosomal protein bS6 family.

In terms of biological role, binds together with bS18 to 16S ribosomal RNA. This is Small ribosomal subunit protein bS6 from Corynebacterium urealyticum (strain ATCC 43042 / DSM 7109).